Consider the following 461-residue polypeptide: tRNA (guanine(10)-N(2))-methyltransferase TRMT11 (461 aa).

This sequence belongs to the class I-like SAM-binding methyltransferase superfamily. TRM11 methyltransferase family. As to quaternary structure, part of the heterodimeric TRMT11-TRM112 methyltransferase complex; this complex forms an active tRNA methyltransferase, where TRMT112 acts as an activator of the catalytic subunit TRMT11.

It localises to the cytoplasm. It catalyses the reaction guanosine(10) in tRNA + S-adenosyl-L-methionine = N(2)-methylguanosine(10) in tRNA + S-adenosyl-L-homocysteine + H(+). Functionally, catalytic subunit of the TRMT11-TRM112 methyltransferase complex, that specifically mediates the S-adenosyl-L-methionine-dependent N(2)-methylation of guanosine nucleotide at position 10 (m2G10) in tRNAs. This is one of the major tRNA (guanine-N(2))-methyltransferases. The chain is tRNA (guanine(10)-N(2))-methyltransferase TRMT11 from Gallus gallus (Chicken).